A 186-amino-acid chain; its full sequence is L-2,4-diaminobutyric acid acetyltransferase (186 aa).

One can recognise an N-acetyltransferase domain in the interval 24 to 179 (YHLRPPRRND…HDDEMLLRIG (156 aa)).

The protein belongs to the acetyltransferase family. EctA subfamily.

It carries out the reaction L-2,4-diaminobutanoate + acetyl-CoA = (2S)-4-acetamido-2-aminobutanoate + CoA + H(+). It functions in the pathway amine and polyamine biosynthesis; ectoine biosynthesis; L-ectoine from L-aspartate 4-semialdehyde: step 2/3. Functionally, catalyzes the acetylation of L-2,4-diaminobutyrate (DABA) to gamma-N-acetyl-alpha,gamma-diaminobutyric acid (ADABA) with acetyl coenzyme A. The chain is L-2,4-diaminobutyric acid acetyltransferase (ectA) from Bordetella parapertussis (strain 12822 / ATCC BAA-587 / NCTC 13253).